We begin with the raw amino-acid sequence, 159 residues long: Cytochrome c-type biogenesis protein CcmE (159 aa).

At 1 to 8 the chain is on the cytoplasmic side; the sequence is MNIRRKNR. A helical; Signal-anchor for type II membrane protein membrane pass occupies residues 9 to 29; sequence LWIACAVLAGLALTIGLVLYA. Residues 30–159 lie on the Periplasmic side of the membrane; the sequence is LRSNIDLFYT…PASVYKDPAS (130 aa). Positions 130 and 134 each coordinate heme. The segment covering 134–147 has biased composition (basic and acidic residues); that stretch reads YTPPEVEKAMEANH. A disordered region spans residues 134 to 159; that stretch reads YTPPEVEKAMEANHRRPASVYKDPAS.

Belongs to the CcmE/CycJ family.

It localises to the cell inner membrane. Functionally, heme chaperone required for the biogenesis of c-type cytochromes. Transiently binds heme delivered by CcmC and transfers the heme to apo-cytochromes in a process facilitated by CcmF and CcmH. The protein is Cytochrome c-type biogenesis protein CcmE of Escherichia coli (strain SMS-3-5 / SECEC).